Consider the following 1527-residue polypeptide: MAERANLVFHNKEIDGTAMKRLISRLIDHFGMGYTSHILDQIKTLGFHQATTTSISLGIEDLLTIPSKGWLVQDAEQQSFLLEKHYYYGAIHAVEKLRQSVEIWYATSEYLKQEMNSNFRITDPSNPVYLMSFSGARGNASQVHQLVGMRGLMADPQGQMIHLPIQSNLREGLSLTEYIISCYGARKGVVDTAVRTADAGYLTRRLVEVVQHIIVRRRDCGTIQGISVSPQNGMTEKLFVQTLIGRVLADDIYIGSRCIASRNQDIGIGLVNRFITAFRAQPFRAQPIYIRTPFTCRSTSWICQLCYGRSPTHGDLVELGEAVGIIAGQSIGEPGTQLTLRTFHTGGVFTGGTADLIRSPSNGKIQFNEDLVHPTRTRHGQPAFLCYIDLHVTIQSQDILHSVNIPLKSLILVQNDQYVESEQVIAEIRAGTSTLHFKEKVQKHIYSESDGEMHWSTDVYHAPEYQYGNLRRLPKTSHLWILSVSMCRSSIASFSLHKDQDQMNTYSFSVDGRYIFDFSMANDQVSHRLLDTFGKKDREILDYLTPDRIVFNGHWNCFYPSILQDNSDLLAKKRRNRLVVPLQYHQEQEKERISCLGISMEIPFMGVLRRNTIFAYFDDPRYRKDKRGSGIVKFRYRTLEEEYRTQEEEYRTREEEYRTREEDSEDEYESPENKYRTREGEGEYKILEDEYRTLEDEYETLEDEYGILEDEYRTLEKDSEEEYGSLENKYRTREGEGEYEILEEESEEEYGSSEDGSEKEYGTLEEDSEEDSEEDSEDEYGSPEEDSILKKEGFIEHRGTKEFSLKYQKEVDRFFFILQELHILPRSSSLKVLDNSIIGVDTQLTKNTRSRLGGLVRVKRKKSHTELKIFSGDIHFPEEADKILGGSLIPPEREKKDSKESKKRKNWVYVQRKKFLKSKEKYFVSVRPAVAYEMDEGINLATLFPQDLLQEEDNLQLRLVNFISHENSKLTQRIYHTNSQFVRTCLVVNWEQEEKEGARASLVEVKTNDLIRDFLRIELVKSTILYTRRRYDRTSVGLIPNNRLDRNNTNSFYSKAKIQSLSQHQEVIGTLLNRNKEYPSLMILLASNCSRIGLFKNSKYPNAVKESNPRIPIRDIFGLLGVIVPSISNFSSSYYLLTHNQILLKKYLFLDNLKQTLQVLQGLKYSLIDENKRISNFDSNIMLEPFHLNWHFLHHDSWEETLAIIHLGQFICENLCLFKLHIKKSGQIFIVNMDSFVLRAAKPYLATIGATVHGHYGKILYKGDRLVTFIYEKSRSSDITQGLPKVEQIFEARSIDSLSPNLERRIEDWNERIPRILGVPWGFLIGAELTIAQSRISLVNKIQKVYRSQGVQIHNRHIEIIIRQVTSKVRVSEDGMSNVFLPGELIGLLRAERAGRALDESIYYRAILLGITRASLNTQSFISEASFQETARVLAKAALRGRIDWLKGLKENVVLGGIIPVGTGFQKFVHRSPQDKNLYLEIQKKNLFASEMRDILFLHTELVSSDSDVTNNFYETSETPFTPIYTI.

Residues C220, C296, C303, and C306 each contribute to the Zn(2+) site. Composition is skewed to basic and acidic residues over residues 644–661 (RTQE…RTRE) and 671–681 (PENKYRTREGE). 2 disordered regions span residues 644–681 (RTQE…REGE) and 712–793 (YRTL…KKEG). 2 stretches are compositionally biased toward acidic residues: residues 737–755 (GEYE…SSED) and 763–786 (TLEE…PEED).

It belongs to the RNA polymerase beta' chain family. RpoC2 subfamily. In plastids the minimal PEP RNA polymerase catalytic core is composed of four subunits: alpha, beta, beta', and beta''. When a (nuclear-encoded) sigma factor is associated with the core the holoenzyme is formed, which can initiate transcription. Zn(2+) is required as a cofactor.

The protein localises to the plastid. It localises to the chloroplast. The catalysed reaction is RNA(n) + a ribonucleoside 5'-triphosphate = RNA(n+1) + diphosphate. DNA-dependent RNA polymerase catalyzes the transcription of DNA into RNA using the four ribonucleoside triphosphates as substrates. The polypeptide is DNA-directed RNA polymerase subunit beta'' (Zea mays (Maize)).